Here is a 130-residue protein sequence, read N- to C-terminus: Protachykinin-1 (130 aa).

The signal sequence occupies residues 1–19 (MKILVAVAVIFFISTQLSA). The propeptide occupies 20 to 56 (EEIGANDDFNYWSDWSDSDQIKEEMPEPFEHLLQRIA). A methionine amide mark is found at Met68 and Met107.

Belongs to the tachykinin family. The substance P form is cleaved at Pro-59 by the prolyl endopeptidase FAP (seprase) activity (in vitro). Substance P is also cleaved and degraded by Angiotensin-converting enzyme (ACE) and neprilysin (MME).

The protein resides in the secreted. Tachykinins are active peptides which excite neurons, evoke behavioral responses, are potent vasodilators and secretagogues, and contract (directly or indirectly) many smooth muscles. In Bos taurus (Bovine), this protein is Protachykinin-1 (TAC1).